A 155-amino-acid chain; its full sequence is uncharacterized protein (155 aa).

This is an uncharacterized protein from Acanthamoeba polyphaga (Amoeba).